Consider the following 180-residue polypeptide: ATP-dependent protease subunit HslV (180 aa).

Thr5 is a catalytic residue. Residues Gly161, Cys164, and Thr167 each contribute to the Na(+) site.

Belongs to the peptidase T1B family. HslV subfamily. A double ring-shaped homohexamer of HslV is capped on each side by a ring-shaped HslU homohexamer. The assembly of the HslU/HslV complex is dependent on binding of ATP.

The protein resides in the cytoplasm. The catalysed reaction is ATP-dependent cleavage of peptide bonds with broad specificity.. Its activity is regulated as follows. Allosterically activated by HslU binding. Protease subunit of a proteasome-like degradation complex believed to be a general protein degrading machinery. In Campylobacter fetus subsp. fetus (strain 82-40), this protein is ATP-dependent protease subunit HslV.